The following is a 492-amino-acid chain: Bifunctional purine biosynthesis protein PurH (492 aa).

Positions 1 to 144 constitute an MGS-like domain; the sequence is MKKAILSVSN…KNYKHVTTIV (144 aa).

The protein belongs to the PurH family.

It catalyses the reaction (6R)-10-formyltetrahydrofolate + 5-amino-1-(5-phospho-beta-D-ribosyl)imidazole-4-carboxamide = 5-formamido-1-(5-phospho-D-ribosyl)imidazole-4-carboxamide + (6S)-5,6,7,8-tetrahydrofolate. The enzyme catalyses IMP + H2O = 5-formamido-1-(5-phospho-D-ribosyl)imidazole-4-carboxamide. The protein operates within purine metabolism; IMP biosynthesis via de novo pathway; 5-formamido-1-(5-phospho-D-ribosyl)imidazole-4-carboxamide from 5-amino-1-(5-phospho-D-ribosyl)imidazole-4-carboxamide (10-formyl THF route): step 1/1. It functions in the pathway purine metabolism; IMP biosynthesis via de novo pathway; IMP from 5-formamido-1-(5-phospho-D-ribosyl)imidazole-4-carboxamide: step 1/1. The protein is Bifunctional purine biosynthesis protein PurH of Staphylococcus aureus (strain MSSA476).